We begin with the raw amino-acid sequence, 178 residues long: CASP-like protein 2A2 (178 aa).

Residues Met1–Ser22 are Cytoplasmic-facing. The helical transmembrane segment at Ala23–Ile43 threads the bilayer. At Lys44 to Asn69 the chain is on the extracellular side. Residues Gly70–Ile90 traverse the membrane as a helical segment. At Ser91–Arg96 the chain is on the cytoplasmic side. The helical transmembrane segment at Thr97–Ala117 threads the bilayer. The Extracellular portion of the chain corresponds to Glu118–Asn145. The helical transmembrane segment at Ala146 to Ile166 threads the bilayer. Over Ser167–Pro178 the chain is Cytoplasmic.

It belongs to the Casparian strip membrane proteins (CASP) family. As to quaternary structure, homodimer and heterodimers. Mostly expressed in flowers and buds and, to a lower extent, in roots and yellow siliques. Localized in the floral organ abscission zone.

The protein resides in the cell membrane. In terms of biological role, involved in floral organ shedding. This is CASP-like protein 2A2 from Arabidopsis thaliana (Mouse-ear cress).